The chain runs to 365 residues: Fatty acid hydroxylase vlmA (365 aa).

Positions 20–41 are disordered; sequence TTIKRRQNDKTKTPKTKPVSKI. N47 carries N-linked (GlcNAc...) asparagine glycosylation. The next 4 membrane-spanning stretches (helical) occupy residues 62–82, 89–109, 144–164, and 179–199; these read ILLQSLLPITVHQLTTLVLSI, VHPFLLRLCVIIGYGYAFRFL, LNWSLPLTVGSRTVMCVLVAY, and WWAWLAVYLSLYPIILDFYYY. The Fatty acid hydroxylase domain maps to 189–335; sequence LYPIILDFYY…TRIWDRLFGT (147 aa).

The protein belongs to the sterol desaturase family. TMEM195 subfamily.

It is found in the membrane. Its pathway is secondary metabolite biosynthesis. In terms of biological role, fatty acid hydroxylase; part of the gene cluster that mediates the biosynthesis of verlamelin, a lipopeptide that exhibits antifungal activity against plant pathogenic fungi. Verlamelin is a cyclic hexadepsipeptide and is bridged by ester bonding between a 5-hydroxytetradecanoic acid moiety and a carboxyl group on the terminal Val of amide-bonded tetradecanoyl-hexapeptide D-allo-Thr-D-Ala-L-Pro-L-Gln-D-Tyr-L-Val. VlmA and vlmB are altogether regarded as essential components in the biosynthesis of 5-hydroxytetradecanoic acid. VlmA catalyzes the hydroxylation at position C5 of tetradecanoic acid produced in primary metabolism, while the precise function of vlmB still remains to be solved. To be loaded onto the waiting NRPS, 5-hydroxytetradecanoic acid is activated in the form of acyladenylate by the AMP-dependent ligase vlmC. VlmS seems to accept the fatty-acyl intermediate onto the initial module to further elongate amino acid residues by the downstream modules. In addition, in the last module at its C-terminus, vlmS contains a surplus condensation (C) domain that may be involved in cyclization, the last step to form verlamelin. In Lecanicillium sp, this protein is Fatty acid hydroxylase vlmA.